We begin with the raw amino-acid sequence, 615 residues long: MPIQVLPPQLANQIAAGEVVERPASVVKELVENSLDAGATRIDIDIERGGAKLIRIRDNGCGIKKDELALALARHATSKIASLDDLEAIISLGFRGEALASISSVSRLTLTSRTAEQQEAWQAYAEGRDMDVTVKPAAHPVGTTLEVLDLFYNTPARRKFLRTEKTEFNHIDEIIRRIALARFDVTINLSHNGKIVRQYRAVPEGGQKERRLGAICGTAFLEQALAIEWQHGDLTLRGWVADPNHTTPALAEIQYCYVNGRMMRDRLINHAIRQACEDKLGADQQPAFVLYLEIDPHQVDVNVHPAKHEVRFHQSRLVHDFIYQGVLSVLQQQLETPLPLDDEPQPAPRAIPENRVAAGRNHFAEPAVREPVAPRYTPAPASGSRPAAPWPNAQPGYQKQQGEVYRQLLQTPAPMQKPKAPEPQEPALAANSQSFGRVLTIVHSDCALLERDGNISLLALPVAERWLRQAQLTPGEAPVCAQPLLIPLRLKVSGEEKSALEKAQSALAELGIDFQSDAQHVTIRAVPLPLRQQNLQILIPELIGYLAKQSVFEPGNIAQWIARNLMSEHAQWSMAQAITLLADVERLCPQLVKTPPGGLLQSVDLHPAIKALKDE.

The interval 369 to 397 (REPVAPRYTPAPASGSRPAAPWPNAQPGY) is disordered. Over residues 378–391 (PAPASGSRPAAPWP) the composition is skewed to low complexity.

The protein belongs to the DNA mismatch repair MutL/HexB family.

Functionally, this protein is involved in the repair of mismatches in DNA. It is required for dam-dependent methyl-directed DNA mismatch repair. May act as a 'molecular matchmaker', a protein that promotes the formation of a stable complex between two or more DNA-binding proteins in an ATP-dependent manner without itself being part of a final effector complex. This is DNA mismatch repair protein MutL from Escherichia coli (strain SMS-3-5 / SECEC).